Consider the following 349-residue polypeptide: tRNA uridine(34) hydroxylase (349 aa).

The Rhodanese domain occupies 146-240 (DDPDAVFIDM…YARKAREQGL (95 aa)). Cys200 functions as the Cysteine persulfide intermediate in the catalytic mechanism. The span at 314–328 (PEEEQRRRRAGRENG) shows a compositional bias: basic and acidic residues. Residues 314–349 (PEEEQRRRRAGRENGNKIFNKSRGRLNTTLGIPDPE) form a disordered region.

The protein belongs to the TrhO family.

It catalyses the reaction uridine(34) in tRNA + AH2 + O2 = 5-hydroxyuridine(34) in tRNA + A + H2O. In terms of biological role, catalyzes oxygen-dependent 5-hydroxyuridine (ho5U) modification at position 34 in tRNAs. This chain is tRNA uridine(34) hydroxylase, found in Cronobacter sakazakii (strain ATCC BAA-894) (Enterobacter sakazakii).